The primary structure comprises 113 residues: Large ribosomal subunit protein uL22 (113 aa).

The protein belongs to the universal ribosomal protein uL22 family. Part of the 50S ribosomal subunit.

Its function is as follows. This protein binds specifically to 23S rRNA; its binding is stimulated by other ribosomal proteins, e.g. L4, L17, and L20. It is important during the early stages of 50S assembly. It makes multiple contacts with different domains of the 23S rRNA in the assembled 50S subunit and ribosome. In terms of biological role, the globular domain of the protein is located near the polypeptide exit tunnel on the outside of the subunit, while an extended beta-hairpin is found that lines the wall of the exit tunnel in the center of the 70S ribosome. This chain is Large ribosomal subunit protein uL22, found in Opitutus terrae (strain DSM 11246 / JCM 15787 / PB90-1).